The following is a 248-amino-acid chain: 4-hydroxy-tetrahydrodipicolinate reductase (248 aa).

NAD(+) contacts are provided by residues 9-14, 77-79, and 104-107; these read GAQGRV, GTT, and APNF. Residue H134 is the Proton donor/acceptor of the active site. H135 provides a ligand contact to (S)-2,3,4,5-tetrahydrodipicolinate. Residue K138 is the Proton donor of the active site. 144–145 serves as a coordination point for (S)-2,3,4,5-tetrahydrodipicolinate; it reads GT. Residues 157–176 are disordered; that stretch reads RREAGMPTQPDATEQSLDGA.

It belongs to the DapB family.

The protein localises to the cytoplasm. The enzyme catalyses (S)-2,3,4,5-tetrahydrodipicolinate + NAD(+) + H2O = (2S,4S)-4-hydroxy-2,3,4,5-tetrahydrodipicolinate + NADH + H(+). It catalyses the reaction (S)-2,3,4,5-tetrahydrodipicolinate + NADP(+) + H2O = (2S,4S)-4-hydroxy-2,3,4,5-tetrahydrodipicolinate + NADPH + H(+). It participates in amino-acid biosynthesis; L-lysine biosynthesis via DAP pathway; (S)-tetrahydrodipicolinate from L-aspartate: step 4/4. Functionally, catalyzes the conversion of 4-hydroxy-tetrahydrodipicolinate (HTPA) to tetrahydrodipicolinate. The sequence is that of 4-hydroxy-tetrahydrodipicolinate reductase from Corynebacterium diphtheriae (strain ATCC 700971 / NCTC 13129 / Biotype gravis).